A 423-amino-acid polypeptide reads, in one-letter code: Putative competence-damage inducible protein (423 aa).

The protein belongs to the CinA family.

The chain is Putative competence-damage inducible protein from Streptococcus equi subsp. zooepidemicus (strain MGCS10565).